The sequence spans 230 residues: Movement and silencing protein TGBp1 (230 aa).

Residues methionine 1–lysine 114 enclose the (+)RNA virus helicase ATP-binding domain. The (+)RNA virus helicase C-terminal domain maps to serine 115–histidine 230.

It belongs to the Tymovirales TGBp1 protein family. Homodimer and homooligomer. Interacts with capsid protein. Interacts with host AGO1; this interaction targets the host protein for degradation, thereby suppressing the antiviral RNA silencing.

The protein localises to the host cytoplasm. Its function is as follows. Transports viral genome to neighboring plant cells directly through plasmosdesmata, without any budding. The movement protein allows efficient cell to cell propagation, by bypassing the host cell wall barrier. Increases plasmodesma size exclusion limit. Acts as a suppressor of RNA-mediated gene silencing, also known as post-transcriptional gene silencing (PTGS), a mechanism of plant viral defense that limits the accumulation of viral RNAs. This is Movement and silencing protein TGBp1 from Plantago asiatica (P1AMV).